Here is a 146-residue protein sequence, read N- to C-terminus: Large ribosomal subunit protein mL49 (146 aa).

The transit peptide at 1–38 directs the protein to the mitochondrion; sequence MISSCVTRCFGRGKCLPGPATASIYQTIRCISTNSNKA.

Belongs to the mitochondrion-specific ribosomal protein mL49 family. As to quaternary structure, component of the mitochondrial large ribosomal subunit (mt-LSU). Mature yeast 74S mitochondrial ribosomes consist of a small (37S) and a large (54S) subunit. The 37S small subunit contains a 15S ribosomal RNA (15S mt-rRNA) and 34 different proteins. The 54S large subunit contains a 21S rRNA (21S mt-rRNA) and 46 different proteins.

It localises to the mitochondrion. Component of the mitochondrial ribosome (mitoribosome), a dedicated translation machinery responsible for the synthesis of mitochondrial genome-encoded proteins, including at least some of the essential transmembrane subunits of the mitochondrial respiratory chain. The mitoribosomes are attached to the mitochondrial inner membrane and translation products are cotranslationally integrated into the membrane. The sequence is that of Large ribosomal subunit protein mL49 (IMG2) from Saccharomyces cerevisiae (strain ATCC 204508 / S288c) (Baker's yeast).